The sequence spans 506 residues: Maturase K (506 aa).

Belongs to the intron maturase 2 family. MatK subfamily.

The protein localises to the plastid. It is found in the chloroplast. Usually encoded in the trnK tRNA gene intron. Probably assists in splicing its own and other chloroplast group II introns. The chain is Maturase K from Jasminum nudiflorum (Winter jasmine).